A 377-amino-acid polypeptide reads, in one-letter code: Chaperone protein DnaJ (377 aa).

A J domain is found at 5-70; sequence DYYEVLGVGK…EKKAAYDQYG (66 aa). A CR-type zinc finger spans residues 137–215; the sequence is GHEAQIRVPH…CHGQGKLKSQ (79 aa). Cys-150, Cys-153, Cys-167, Cys-170, Cys-189, Cys-192, Cys-203, and Cys-206 together coordinate Zn(2+). CXXCXGXG motif repeat units lie at residues 150 to 157, 167 to 174, 189 to 196, and 203 to 210; these read CDHCHGNG, CPTCHGAG, CPKCHGSG, and CTKCHGQG.

Belongs to the DnaJ family. In terms of assembly, homodimer. Zn(2+) is required as a cofactor.

The protein localises to the cytoplasm. In terms of biological role, participates actively in the response to hyperosmotic and heat shock by preventing the aggregation of stress-denatured proteins and by disaggregating proteins, also in an autonomous, DnaK-independent fashion. Unfolded proteins bind initially to DnaJ; upon interaction with the DnaJ-bound protein, DnaK hydrolyzes its bound ATP, resulting in the formation of a stable complex. GrpE releases ADP from DnaK; ATP binding to DnaK triggers the release of the substrate protein, thus completing the reaction cycle. Several rounds of ATP-dependent interactions between DnaJ, DnaK and GrpE are required for fully efficient folding. Also involved, together with DnaK and GrpE, in the DNA replication of plasmids through activation of initiation proteins. The chain is Chaperone protein DnaJ from Cupriavidus taiwanensis (strain DSM 17343 / BCRC 17206 / CCUG 44338 / CIP 107171 / LMG 19424 / R1) (Ralstonia taiwanensis (strain LMG 19424)).